A 33-amino-acid polypeptide reads, in one-letter code: Photosystem II reaction center protein Psb30 (33 aa).

A helical transmembrane segment spans residues 5–25 (VIAQLTVLALIVISGPLVIAL).

Belongs to the Psb30/Ycf12 family. As to quaternary structure, PSII is composed of 1 copy each of membrane proteins PsbA, PsbB, PsbC, PsbD, PsbE, PsbF, PsbH, PsbI, PsbJ, PsbK, PsbL, PsbM, PsbT, PsbX, PsbY, PsbZ, Psb30/Ycf12, peripheral proteins of the oxygen-evolving complex and a large number of cofactors. It forms dimeric complexes.

It localises to the plastid. The protein resides in the chloroplast thylakoid membrane. A core subunit of photosystem II (PSII), probably helps stabilize the reaction center. This chain is Photosystem II reaction center protein Psb30, found in Huperzia lucidula (Shining clubmoss).